The following is a 39-amino-acid chain: ATFTIRNNXPYTVWAAASPGGGRRLDMARIWGRTNXNFD.

This sequence belongs to the thaumatin family. Post-translationally, contains intrachain disulfide bonds.

Functionally, may be an important antifungal protein. This Hevea brasiliensis (Para rubber tree) protein is Osmotin-like protein.